Reading from the N-terminus, the 157-residue chain is UPF0262 protein amb3341 (157 aa).

The protein belongs to the UPF0262 family.

This Paramagnetospirillum magneticum (strain ATCC 700264 / AMB-1) (Magnetospirillum magneticum) protein is UPF0262 protein amb3341.